The chain runs to 601 residues: Tripeptidyl-peptidase SED4 (601 aa).

The signal sequence occupies residues 1–22; it reads MVSFTLRAIGACLVSLPALVTA. Positions 23–202 are cleaved as a propeptide — removed in mature form; that stretch reads APTSHISGDF…SVFTSDLEIT (180 aa). 2 N-linked (GlcNAc...) asparagine glycosylation sites follow: N210 and N281. In terms of domain architecture, Peptidase S53 spans 212-601; that stretch reads TITPDCIRDL…ETLSKLVLQY (390 aa). Residues E288 and D292 each act as charge relay system in the active site. N-linked (GlcNAc...) asparagine glycosylation is present at N323. The active-site Charge relay system is S504. Positions 546 and 547 each coordinate Ca(2+). N575 is a glycosylation site (N-linked (GlcNAc...) asparagine). Ca(2+)-binding residues include G579 and D581.

It depends on Ca(2+) as a cofactor.

The protein localises to the secreted. It localises to the extracellular space. The catalysed reaction is Release of an N-terminal tripeptide from a polypeptide.. In terms of biological role, secreted tripeptidyl-peptidase which degrades proteins at acidic pHs and is involved in virulence. In Arthroderma otae (strain ATCC MYA-4605 / CBS 113480) (Microsporum canis), this protein is Tripeptidyl-peptidase SED4 (SED4).